We begin with the raw amino-acid sequence, 55 residues long: ATP synthase protein 8 (55 aa).

A helical transmembrane segment spans residues 7 to 28; that stretch reads ISWFFNFLLAWFFLFIVVTILL.

It belongs to the ATPase protein 8 family. As to quaternary structure, F-type ATPases have 2 components, CF(1) - the catalytic core - and CF(0) - the membrane proton channel.

Its subcellular location is the mitochondrion membrane. Functionally, mitochondrial membrane ATP synthase (F(1)F(0) ATP synthase or Complex V) produces ATP from ADP in the presence of a proton gradient across the membrane which is generated by electron transport complexes of the respiratory chain. F-type ATPases consist of two structural domains, F(1) - containing the extramembraneous catalytic core and F(0) - containing the membrane proton channel, linked together by a central stalk and a peripheral stalk. During catalysis, ATP synthesis in the catalytic domain of F(1) is coupled via a rotary mechanism of the central stalk subunits to proton translocation. Part of the complex F(0) domain. Minor subunit located with subunit a in the membrane. The protein is ATP synthase protein 8 (MT-ATP8) of Pisaster ochraceus (Ochre sea star).